Reading from the N-terminus, the 380-residue chain is MKKIILLGATGSIGTQTLAIIRENPEKFQLVALSFGRNMERGRAIIQEFKPKMVAVWHTRDRITLESEFPNVKFFNGLEGLREVATYLDGDVLLNAVMGSVGLLPTLDAIEAGKSIAIANKETLVTAGHIVMRAAREKNISLLPVDSEHSAILQALNGENPERIEKLVLTASGGSFRDKTRGELSEVTVKEALKHPNWNMGNKLTIDSATMFNKGLEVMEAHWLFGVDYDDIEVVIQRESIVHSMVQFVDGSFIAQLGTPDMRMPIQYALTYPDRLFIPYEKNFRITDFSALHFEKVDYERFPALKLAYNAGKIGGTMPTVLNAANEIAVAGFLNGQVAFYNIEALVENALNRHTSISEPDLDTILQVDQETRAYVKTLL.

Residues T10, G11, S12, I13, G36, R37, N38, and N120 each coordinate NADPH. Position 121 (K121) interacts with 1-deoxy-D-xylulose 5-phosphate. Residue E122 participates in NADPH binding. A Mn(2+)-binding site is contributed by D146. S147, E148, S172, and H195 together coordinate 1-deoxy-D-xylulose 5-phosphate. E148 contacts Mn(2+). G201 contributes to the NADPH binding site. Positions 208, 213, 214, and 217 each coordinate 1-deoxy-D-xylulose 5-phosphate. E217 lines the Mn(2+) pocket.

This sequence belongs to the DXR family. It depends on Mg(2+) as a cofactor. Mn(2+) serves as cofactor.

It catalyses the reaction 2-C-methyl-D-erythritol 4-phosphate + NADP(+) = 1-deoxy-D-xylulose 5-phosphate + NADPH + H(+). It participates in isoprenoid biosynthesis; isopentenyl diphosphate biosynthesis via DXP pathway; isopentenyl diphosphate from 1-deoxy-D-xylulose 5-phosphate: step 1/6. Functionally, catalyzes the NADPH-dependent rearrangement and reduction of 1-deoxy-D-xylulose-5-phosphate (DXP) to 2-C-methyl-D-erythritol 4-phosphate (MEP). This is 1-deoxy-D-xylulose 5-phosphate reductoisomerase from Listeria welshimeri serovar 6b (strain ATCC 35897 / DSM 20650 / CCUG 15529 / CIP 8149 / NCTC 11857 / SLCC 5334 / V8).